Consider the following 669-residue polypeptide: Diacylglycerol lipase-beta (669 aa).

The Cytoplasmic segment spans residues 1 to 17 (MPGMVLFGRRWSLASDD). A helical transmembrane segment spans residues 18–38 (LVFPGSFELFLRVLWWIVSLT). Topologically, residues 39–58 (LYLTHRRRLDCPGGVLLSTY) are extracellular. The chain crosses the membrane as a helical span at residues 59–79 (LIVLLVLLAVIICTVLAIVCV). The Cytoplasmic portion of the chain corresponds to 80 to 102 (SMRGTICNPGPRKSMSKLLYIRL). The chain crosses the membrane as a helical span at residues 103 to 123 (ALFLPEMVWASLGAAWVAKGI). Over 124 to 128 (QCDRT) the chain is Extracellular. A helical transmembrane segment spans residues 129-149 (VVIGIIATVIVSWIVIAATMV). Residues 150-669 (TIIFVFDPLG…CPGQGGSSVP (520 aa)) lie on the Cytoplasmic side of the membrane. Residues S443 and D495 each act as charge relay system in the active site. S570, S578, and S582 each carry phosphoserine.

This sequence belongs to the AB hydrolase superfamily. Lipase family. The cofactor is Ca(2+). In terms of tissue distribution, expressed in liver and immune cells such as macrophages and microglias. In embryonic brains present in axonal tracts, while in adults localizes to dendritic fields, correlating with the developmental change in requirement for 2-AG synthesis from the pre- to the postsynaptic compartment (at protein level).

It localises to the cell membrane. It catalyses the reaction a 1,2-diacyl-sn-glycerol + H2O = a 2-acylglycerol + a fatty acid + H(+). It carries out the reaction 1-octadecanoyl-2-(5Z,8Z,11Z,14Z-eicosatetraenoyl)-sn-glycerol + H2O = 2-(5Z,8Z,11Z,14Z-eicosatetraenoyl)-glycerol + octadecanoate + H(+). The enzyme catalyses 1,2-di-(9Z-octadecenoyl)-sn-glycerol + H2O = 2-(9Z-octadecenoyl)-glycerol + (9Z)-octadecenoate + H(+). The catalysed reaction is 1-(9Z-octadecenoyl)-2-(5Z,8Z,11Z,14Z-eicosatetraenoyl)-sn-glycerol + H2O = 2-(5Z,8Z,11Z,14Z-eicosatetraenoyl)-glycerol + (9Z)-octadecenoate + H(+). It catalyses the reaction 1-(9Z-octadecenoyl)-2-octadecanoyl-sn-glycerol + H2O = 2-octadecanoylglycerol + (9Z)-octadecenoate + H(+). It carries out the reaction 1-(9Z-octadecenoyl)-2-(9Z,12Z-octadecadienoyl)-sn-glycerol + H2O = 2-(9Z,12Z-octadecadienoyl)-glycerol + (9Z)-octadecenoate + H(+). The enzyme catalyses 1-(9Z-octadecenoyl)-2-O-(5Z,8Z,11Z,14Z-eicosatetraenyl)-sn-glycerol + H2O = 2-O-(5Z,8Z,11Z,14Z)-eicosatetraenylglycerol + (9Z)-octadecenoate + H(+). The catalysed reaction is a triacylglycerol + H2O = a diacylglycerol + a fatty acid + H(+). It catalyses the reaction 1,2,3-tri-(5Z,8Z,11Z,14Z-eicosatetraenoyl)-glycerol + H2O = 1,2-di-(5Z,8Z,11Z,14Z-eicosatetraenoyl)-glycerol + (5Z,8Z,11Z,14Z)-eicosatetraenoate + H(+). It carries out the reaction 1,2,3-(4Z,7Z,10Z,13Z,16Z,19Z-docosahexaenoyl)-glycerol + H2O = 1,2-di-(4Z,7Z,10Z,13Z,16Z,19Z-docosahexaenoyl)-glycerol + (4Z,7Z,10Z,13Z,16Z,19Z)-docosahexaenoate + H(+). Inhibited by the 1,2,3-triazole urea covalent inhibitors KT109 and KT172. Inhibited by p-hydroxy-mercuri-benzoate and HgCl(2), but not by PMSF. Also inhibited by RHC80267, a drug that blocks 2-AG formation. In terms of biological role, lipase that catalyzes the hydrolysis of arachidonic acid (AA)-esterified diacylglycerols (DAGs) to produce the principal endocannabinoid, 2-arachidonoylglycerol (2-AG) which can be further cleaved by downstream enzymes to release arachidonic acid (AA) for cyclooxygenase (COX)-mediated eicosanoid production. Preferentially hydrolyzes DAGs at the sn-1 position in a calcium-dependent manner and has negligible activity against other lipids including monoacylglycerols and phospholipids. Plays a key role in the regulation of 2-AG and AA pools utilized by COX1/2 to generate lipid mediators of macrophage and microglia inflammatory responses. Also functions as a polyunsaturated fatty acids-specific triacylglycerol lipase in macrophages. Plays an important role to support the metabolic and signaling demands of macrophages. In Mus musculus (Mouse), this protein is Diacylglycerol lipase-beta (Daglb).